The chain runs to 227 residues: uncharacterized protein (227 aa).

This is an uncharacterized protein from Schizosaccharomyces pombe (strain 972 / ATCC 24843) (Fission yeast).